The primary structure comprises 120 residues: Large ribosomal subunit protein bL19 (120 aa).

Belongs to the bacterial ribosomal protein bL19 family.

In terms of biological role, this protein is located at the 30S-50S ribosomal subunit interface and may play a role in the structure and function of the aminoacyl-tRNA binding site. This Synechococcus sp. (strain ATCC 27144 / PCC 6301 / SAUG 1402/1) (Anacystis nidulans) protein is Large ribosomal subunit protein bL19.